The following is a 372-amino-acid chain: Beta-1,3-N-acetylglucosaminyltransferase radical fringe (372 aa).

The Cytoplasmic segment spans residues 1–10; that stretch reads MNSSCLGLRR. The chain crosses the membrane as a helical; Signal-anchor for type II membrane protein span at residues 11–27; it reads TCFLLSVTAAAVLLLLL. Over 28–372 the chain is Lumenal; it reads PRGQPPAAPR…TIWCPNKKMS (345 aa). Pro residues predominate over residues 30–48; it reads GQPPAAPRRRPPPAGPSRP. The disordered stretch occupies residues 30 to 96; the sequence is GQPPAAPRRR…RVRMGPPGGS (67 aa). Positions 64-78 are enriched in gly residues; the sequence is DRGGGSGAAGGGRGV. Arginine 120 contacts substrate. An N-linked (GlcNAc...) asparagine glycan is attached at asparagine 159. 2 disulfide bridges follow: cysteine 160–cysteine 171 and cysteine 189–cysteine 253. Position 193 (aspartate 193) interacts with substrate. Residue aspartate 194 coordinates Mn(2+). Aspartate 283 is an active-site residue. Histidine 307 serves as a coordination point for Mn(2+). An intrachain disulfide couples cysteine 357 to cysteine 366.

Belongs to the glycosyltransferase 31 family. Requires Mn(2+) as cofactor.

The protein localises to the golgi apparatus membrane. The catalysed reaction is 3-O-(alpha-L-fucosyl)-L-threonyl-[EGF-like domain protein] + UDP-N-acetyl-alpha-D-glucosamine = 3-O-(N-acetyl-beta-D-glucosaminyl-(1-&gt;3)-alpha-L-fucosyl)-L-threonyl-[EGF-like domain protein] + UDP + H(+). It catalyses the reaction 3-O-(alpha-L-fucosyl)-L-seryl-[EGF-like domain protein] + UDP-N-acetyl-alpha-D-glucosamine = 3-O-(N-acetyl-beta-D-glucosaminyl-(1-&gt;3)-alpha-L-fucosyl)-L-seryl-[EGF-like domain protein] + UDP + H(+). In terms of biological role, glycosyltransferase that initiates the elongation of O-linked fucose residues attached to EGF-like repeats in the extracellular domain of Notch molecules. Plays an important role in limb outgrowth, it directs the formation and positioning of the apical ectodermal ridge (AER), one of the key organizer centers of vertebrate limb development. This is Beta-1,3-N-acetylglucosaminyltransferase radical fringe (RFNG) from Gallus gallus (Chicken).